A 915-amino-acid polypeptide reads, in one-letter code: Protein inturned (915 aa).

Residues 88–144 (NAKRQANSSNKSEAKLKKLTKILRRKRRPSQRKAEGKDSSQRPASILKNQAGQRPGV) are disordered. A compositionally biased stretch (basic residues) spans 104 to 118 (KKLTKILRRKRRPSQ). Residues 128-139 (QRPASILKNQAG) are compositionally biased toward polar residues. Residues 165-253 (SVSSSSADRG…PMQVRLTLET (89 aa)) form the PDZ domain. Positions 688–738 (GIRGRRASPQRSQSDSGSEGHADGTPASVARRDSLGSGGSDGSLGSAGFLK) are disordered.

This sequence belongs to the inturned family.

The protein localises to the cytoplasm. Its subcellular location is the cell surface. It is found in the cytoskeleton. It localises to the cilium basal body. In terms of biological role, plays a key role in ciliogenesis and embryonic development. Regulator of cilia formation by controlling the organization of the apical actin cytoskeleton and the positioning of the basal bodies at the apical cell surface, which in turn is essential for the normal orientation of elongating ciliary microtubules. Plays a key role in definition of cell polarity via its role in ciliogenesis but not via conversion extension. Has an indirect effect on hedgehog signaling. The chain is Protein inturned (intu) from Danio rerio (Zebrafish).